A 248-amino-acid polypeptide reads, in one-letter code: Triosephosphate isomerase (248 aa).

Residues Asn-11 and Lys-13 each coordinate substrate. The active-site Electrophile is His-95. Glu-165 (proton acceptor) is an active-site residue.

This sequence belongs to the triosephosphate isomerase family. As to quaternary structure, homodimer.

It is found in the cytoplasm. It carries out the reaction dihydroxyacetone phosphate = methylglyoxal + phosphate. The catalysed reaction is D-glyceraldehyde 3-phosphate = dihydroxyacetone phosphate. Its pathway is carbohydrate degradation; glycolysis; D-glyceraldehyde 3-phosphate from glycerone phosphate: step 1/1. It participates in carbohydrate biosynthesis; gluconeogenesis. Functionally, triosephosphate isomerase is an extremely efficient metabolic enzyme that catalyzes the interconversion between dihydroxyacetone phosphate (DHAP) and D-glyceraldehyde-3-phosphate (G3P) in glycolysis and gluconeogenesis. It is also responsible for the non-negligible production of methylglyoxal a reactive cytotoxic side-product that modifies and can alter proteins, DNA and lipids. The sequence is that of Triosephosphate isomerase (tpi1) from Xenopus tropicalis (Western clawed frog).